Reading from the N-terminus, the 70-residue chain is DNA gyrase inhibitor YacG (70 aa).

Residues Cys-9, Cys-12, Cys-28, and Cys-32 each coordinate Zn(2+). The segment at 44–70 is disordered; that stretch reads SRKIPGSSIDPESIVTTNNKQDNVDEQ.

This sequence belongs to the DNA gyrase inhibitor YacG family. In terms of assembly, interacts with GyrB. Zn(2+) is required as a cofactor.

Inhibits all the catalytic activities of DNA gyrase by preventing its interaction with DNA. Acts by binding directly to the C-terminal domain of GyrB, which probably disrupts DNA binding by the gyrase. The chain is DNA gyrase inhibitor YacG from Legionella pneumophila subsp. pneumophila (strain Philadelphia 1 / ATCC 33152 / DSM 7513).